Reading from the N-terminus, the 221-residue chain is Octanoyltransferase (221 aa).

Residues 14–202 form the BPL/LPL catalytic domain; that stretch reads GVRPDTLWFL…MLGARNAPHP (189 aa). Substrate is bound by residues 54–61, 128–130, and 141–143; these read RGGLLTYH, SIG, and GFA. The Acyl-thioester intermediate role is filled by Cys-159. Residues 197–221 form a disordered region; that stretch reads RNAPHPPAPNLSSGDLGTGTRAGRT.

Belongs to the LipB family.

It is found in the cytoplasm. It carries out the reaction octanoyl-[ACP] + L-lysyl-[protein] = N(6)-octanoyl-L-lysyl-[protein] + holo-[ACP] + H(+). It participates in protein modification; protein lipoylation via endogenous pathway; protein N(6)-(lipoyl)lysine from octanoyl-[acyl-carrier-protein]: step 1/2. Catalyzes the transfer of endogenously produced octanoic acid from octanoyl-acyl-carrier-protein onto the lipoyl domains of lipoate-dependent enzymes. Lipoyl-ACP can also act as a substrate although octanoyl-ACP is likely to be the physiological substrate. The chain is Octanoyltransferase from Frankia casuarinae (strain DSM 45818 / CECT 9043 / HFP020203 / CcI3).